A 1239-amino-acid polypeptide reads, in one-letter code: MAAVLESLLREEVPVAAAVRWIARSTPSSEDSSEVAALSALRPLRKEFVPFLLNFLREQSSRVLPQGPSTPAKTPVASAALPARQGAPARGGRGARSQLFPAAEPLSAAAEAPLARRAGRRRGPGPGPSRERGGRGSGAAEEGASGESPPWAGGRKPKGSGSPGSPRLSLSDPPNLSNLEEFPPVGTVPPGSAGRTKPSRRINPTPVSEERSLSKPKTCFTSPPISCVPSSQPSTLDTSPWGLGLPPGCRSLQEEREMLRKARTKQLQQSPTPASPIPESGSPVPSRTGNLTAEPADPARVSSRQRLELVALIYSSCIAENLVPNLFLELFFVLQLLTARRMVATKDSDLESSQGALDSLDTPLFRSIHDCVFFAVQVLEHQFQVLSYLDKGTLKLLAENERLLCFSPALQGRLRAAYEGSVAKVSLVIPPSAQAVSFQPETDNRANFSSDRAFHTFKKQRDVFYEVLREWEDHHEEPSWDFEKGLGSRIRAMMGQLSAACSHSHFVRLFQKQLLQMCQSPGGAGGSVLGEAPDVLNMLGADKLGRLRQLQERLIAPQSSGGPCPPPTFPGCQGFFRDFIMSASSFHFNQHLMDSLSLKIRELNGLRLPQHEPGDEDGESDMDWQGERRQFAVVLLSLRLLAKFLGFVAFLPYRGHEPPPTRELQDSILALRSQVPPVLDIRALLQQGLWARRAVLTVPWLVEFLSFADHIVPLLDYYRSVFTLLLRLHRSLVLSKENEGEMCFLNKLLLLAVLGWLFQIPTVPEDLFFLEDGQVDAFEVTTTASEHGLDSVPVVDQQLLYTCCPYIGELRKLLASWVSGSSGRSGGFVRKITPTTTSSLGALPLQTSQGLQAQLAEAFFHNQPPSLRRTVEFVAERIGSNCVKHIKATLVADLVHQAESLLQEQLVARGQEGGDPAQLLESLCSQLCPHGAQALTQGREFCQRKSPTAVRALLPEETPAAVLSSAENIAVGLATEKACSWLSANITALIRREVKAAVSRMLRAQGPEPTARVERRGCSRACEHHAPLPSHLISEIKFHHCSLQDVLSLAAGPRDPEEGVSPEHLEQLLNQMGQSLRCRQFLCPTAEQHLAKCSVELASLLVADQIPILGPPTQHRLERGHARRLLHMLLSLWKDDFQGPVPLQLLLSPRNVGLLADTRPREWDLLLFLLRELVEKDLMGHLEIEACLGRLNEAQWPGDFSEELSTLFRLFLAEPHLLEPQLRACELMQPNRGTVLAQS.

N-acetylalanine is present on alanine 2. Over residues 61–72 the composition is skewed to polar residues; it reads SRVLPQGPSTPA. Disordered stretches follow at residues 61–249 and 261–299; these read SRVL…PPGC and KART…ADPA. Position 70 is a phosphothreonine (threonine 70). Composition is skewed to low complexity over residues 77 to 88, 95 to 116, and 138 to 179; these read ASAALPARQGAP, ARSQ…PLAR, and GAAE…LSNL. Residues 193–213 form an interaction with ASF1A/B region; it reads AGRTKPSRRINPTPVSEERSL. Polar residues predominate over residues 219 to 238; it reads CFTSPPISCVPSSQPSTLDT. Phosphoserine is present on serine 270. 2 helical membrane passes run 317–337 and 631–651; these read CIAE…LQLL and FAVV…VAFL.

In terms of assembly, interacts with ASF1A and ASF1B. Found in a cytosolic complex with ASF1A, ASF1B, IPO4 and histones H3.1 and H4. Widely expressed in adult mice, the highest levels can be measured in erythropoietic cells.

The protein resides in the cytoplasm. Its subcellular location is the nucleus. The protein localises to the membrane. Its function is as follows. May act as a negative regulator of ASF1 in chromatin assembly. This Mus musculus (Mouse) protein is Codanin-1 (Cdan1).